The following is a 380-amino-acid chain: DNA replication and repair protein RecF (380 aa).

30-37 (GPNGFGKT) lines the ATP pocket.

The protein belongs to the RecF family.

The protein resides in the cytoplasm. The RecF protein is involved in DNA metabolism; it is required for DNA replication and normal SOS inducibility. RecF binds preferentially to single-stranded, linear DNA. It also seems to bind ATP. This is DNA replication and repair protein RecF from Mycobacterium sp. (strain KMS).